Consider the following 157-residue polypeptide: uncharacterized protein (157 aa).

Residues 1–19 (MRKYLIILVLLLFLSSSFG) form the signal peptide.

This is an uncharacterized protein from Methanocaldococcus jannaschii (strain ATCC 43067 / DSM 2661 / JAL-1 / JCM 10045 / NBRC 100440) (Methanococcus jannaschii).